The chain runs to 408 residues: RUN domain-containing protein 3B (408 aa).

The tract at residues Met-1–Leu-25 is disordered. Positions Gly-8–Lys-22 are enriched in gly residues. Arg-13 bears the Omega-N-methylarginine mark. One can recognise an RUN domain in the interval Asp-58–Glu-190. The tract at residues Asp-213–Val-238 is disordered. Residues Ser-216 and Ser-217 each carry the phosphoserine modification. Residues Phe-225 to Glu-236 show a composition bias toward polar residues. The stretch at Ala-301–Leu-326 forms a coiled coil. The disordered stretch occupies residues Gln-337–Gly-359.

The protein belongs to the RUNDC3 family. In terms of assembly, interacts with RAP2A.

The protein is RUN domain-containing protein 3B (Rundc3b) of Mus musculus (Mouse).